We begin with the raw amino-acid sequence, 1173 residues long: MSNKTGGKRSATINSDIANHNMVSEVPPERPNIRATRTSRKAIAFGKRAHSMKRNPNAPVTKAGWLYKQASSGVKQWNKRWFVLVDRCLFYYKDEKQESILGSIPLLSFRVAAVQPSDNISRKHTFKAEHAGVRTYFFSAESPEEQEAWIQAMGEAARVQIPPAQKSVPQPVRHSLEKPDSENIPPSKHHQQPPHNNLTKLEPEAKTRGEGDGRGCEKAERRPERPEVKKETLVKANGLPSGPETASEPGSPYPDGPRVPGGGEHPAQPNGWQYSSPSRPGSTAFPPHDGDSGGQRRSFPPRTDPDKIAQRKSSMNQLQQWVNLRRGVPPPEDLRSPSRFYPMPRRVPDYYNPYSSQYPDDYQYYPPGVRPDSICSMPAYDRISPPWALEDKRHSFRNGGGPTYQLHEWKESTSYGRQDGTVWIPSPSRQPVFYDELDAASGSLRRLSLQPRSHSVPRSPSQGSYSRARIYSPVRSPSARFDRLPPRSEDIYADPAAYVMRRSISSPKYDYLGDRRPVPAGLFPYNYPSSPTVHDKMDELLDLQLQRNLEYLDQQMSESETLISMVNRMVENSSPRAHLFMQVPAYPEVFRDGLHTFKLNEQDTDKLLGKLCEQNKVVREQERLVQQLRAEKESLESALMGTHQELEMFGSQPAYPEKLLHKKESLQNQLINIRVELSQATTALTNSTVVYENLESEVSALHDELWEQLNLDIQNEVLNRQIQKEIWRIQDVMEGLRKNNPSRGTDTAKHRGGLGPSATYSSNSPASPLSSASLTSPLSPFSMVSGSQGSPTKPGSSEEPGPPRPPLPKAYVPLESPPTVPPLPNESRFWPYPNSPSWHRSGETAKGQPKTGYETSKKDPSQTSPLGTPRDINLVPTRQEVEAEKQAALNKVGIVPPRTKSPAEEELTPSAVVRRTTNGLTNGLSSRQERPKSAVFSGEGKVKMSVEEQMDRMRRHQSGSMKEKRRSLQLPASPAPEPSTRPAYKVVRRHRSIHEVDISNLEAALRAEEPGGQAYETPREEIARLRKMELEPQHYDVDISKELSTPDKVLIPERYIDLEPDTPLSPEELKEKQKKVERIKTLIAKSSMQNVVPIGEGDSVDVPQDSESQLQEQEKRIEISCALATEASRRGRMLSVQCATPSPPTSPASPTPPVNPLSSDRPRGADSSHTMRV.

Residues Met1–Met22 show a composition bias toward polar residues. The tract at residues Met1 to Ser39 is disordered. In terms of domain architecture, PH spans Pro59–Arg158. Residues Pro163–Arg346 form a disordered region. Residues Leu201–Leu233 are compositionally biased toward basic and acidic residues. Residues Ser247 and Ser251 each carry the phosphoserine modification. 2 stretches are compositionally biased toward polar residues: residues Asn270 to Gly281 and Arg311 to Val322. 4 positions are modified to phosphoserine: Ser314, Ser459, Ser461, and Ser472. Tyr492 is subject to Phosphotyrosine. Ser665 carries the phosphoserine modification. Disordered stretches follow at residues Arg737 to Ile872 and Ala888 to Tyr984. Composition is skewed to low complexity over residues Ser761–Ser782 and Gly789–Glu799. Residues Glu815–Pro824 are compositionally biased toward pro residues. A Phosphoserine modification is found at Ser864. Thr868 is subject to Phosphothreonine. Ser901 carries the phosphoserine modification. Residue Thr908 is modified to Phosphothreonine. Residues Arg915 to Ser926 show a composition bias toward polar residues. Ser925 is subject to Phosphoserine. Residues Gly940 to Arg952 are compositionally biased toward basic and acidic residues. The segment covering Met953 to Ser967 has biased composition (basic residues). Ser973, Ser979, and Ser992 each carry phosphoserine. Thr1045 carries the post-translational modification Phosphothreonine. Ser1065 is modified (phosphoserine). 2 disordered regions span residues Pro1093–Glu1114 and Arg1130–Val1173. Thr1140 is subject to Phosphothreonine. Pro residues predominate over residues Pro1141 to Asn1155. Residue Ser1142 is modified to Phosphoserine. Residue Thr1145 is modified to Phosphothreonine. Phosphoserine is present on residues Ser1146 and Ser1149. Thr1151 carries the phosphothreonine modification.

The chain is Pleckstrin homology domain-containing family A member 6 (Plekha6) from Mus musculus (Mouse).